The chain runs to 451 residues: Protease RseP (451 aa).

Histidine 22 lines the Zn(2+) pocket. Residue glutamate 23 is part of the active site. A Zn(2+)-binding site is contributed by histidine 26. Residues 98-120 form a helical membrane-spanning segment; it reads AAIVSAGPIANFLFAIVAYWLVF. PDZ domains lie at 115–186 and 199–280; these read AYWL…APFG and QWQF…ERES. A run of 2 helical transmembrane segments spans residues 377 to 399 and 427 to 446; these read LVYY…LFPL and FSYR…ALFN.

The protein belongs to the peptidase M50B family. Interacts with RseA. The cofactor is Zn(2+).

Its subcellular location is the cell inner membrane. Its function is as follows. A site-2 regulated intramembrane protease (S2P) that cleaves the peptide bond between 'Ala-108' and 'Cys-109' in the transmembrane region of RseA. Part of a regulated intramembrane proteolysis (RIP) cascade. Acts on DegS-cleaved RseA to release the cytoplasmic domain of RseA. This provides the cell with sigma-E (RpoE) activity through the proteolysis of RseA. The polypeptide is Protease RseP (rseP) (Yersinia pestis).